Consider the following 117-residue polypeptide: MKGKKYYSDYHVWIEPIHSQIVRLGLSSRMQEHLGNILHIDLPSLGASIKEGEELCVLESSKSAIEVLSPVSGEVIEVNIALEDDTHPINHSAESEGWFVVLQLSEDFDGERFSLDP.

The Lipoyl-binding domain maps to 21-103 (IVRLGLSSRM…ESEGWFVVLQ (83 aa)). K62 is modified (N6-lipoyllysine).

It belongs to the GcvH family. (R)-lipoate serves as cofactor.

The protein is Glycine cleavage system H-like protein of Chlamydia muridarum (strain MoPn / Nigg).